Reading from the N-terminus, the 767-residue chain is 5-methyltetrahydropteroyltriglutamate--homocysteine methyltransferase (767 aa).

Lys19 is a binding site for 5-methyltetrahydropteroyltri-L-glutamate. Ser89 carries the post-translational modification Phosphoserine. Asn126 contacts 5-methyltetrahydropteroyltri-L-glutamate. Ser242 carries the phosphoserine modification. L-homocysteine-binding positions include Ile444–Ser446 and Glu497. L-methionine contacts are provided by residues Ile444–Ser446 and Glu497. Residues Asp502, Tyr525, and Arg528–Tyr529 contribute to the 5-methyltetrahydropteroyltri-L-glutamate site. The residue at position 566 (Thr566) is a Phosphothreonine. Trp574 is a 5-methyltetrahydropteroyltri-L-glutamate binding site. Asp612 is a binding site for L-homocysteine. Asp612 contacts L-methionine. The residue at position 629 (Ser629) is a Phosphoserine. Zn(2+) is bound by residues His655, Cys657, and Glu677. The active-site Proton donor is the His705. Ser706 carries the post-translational modification Phosphoserine. Residue Cys737 coordinates Zn(2+).

Belongs to the vitamin-B12 independent methionine synthase family. Zn(2+) is required as a cofactor.

It catalyses the reaction 5-methyltetrahydropteroyltri-L-glutamate + L-homocysteine = tetrahydropteroyltri-L-glutamate + L-methionine. It functions in the pathway amino-acid biosynthesis; L-methionine biosynthesis via de novo pathway; L-methionine from L-homocysteine (MetE route): step 1/1. Its function is as follows. Catalyzes the transfer of a methyl group from 5-methyltetrahydrofolate to homocysteine resulting in methionine formation. The polypeptide is 5-methyltetrahydropteroyltriglutamate--homocysteine methyltransferase (MET6) (Saccharomyces cerevisiae (strain ATCC 204508 / S288c) (Baker's yeast)).